The primary structure comprises 721 residues: Angiomotin-like 2a (721 aa).

The tract at residues 35–84 is disordered; the sequence is QQALRGGSSGGGAGSPRSSLESLTQEESLSPQLSARQEPQGQEHQGDFQH. The segment covering 49–68 has biased composition (low complexity); that stretch reads SPRSSLESLTQEESLSPQLS. Tyrosine 103 carries the phosphotyrosine; by FGFR1 modification. The interval 169–214 is disordered; that stretch reads DNIPMSSSHSYPQLSNNHSDTVVNEQSVHQPDQRGPPPEYPFMVRS. Residues 172-198 show a composition bias toward polar residues; sequence PMSSSHSYPQLSNNHSDTVVNEQSVHQ. Residues 275–531 adopt a coiled-coil conformation; that stretch reads ANNFQMEQLI…TRWEQKYLEE (257 aa). Polar residues predominate over residues 554–567; it reads INHSPRNSPNSSFN. Disordered regions lie at residues 554–575 and 666–709; these read INHSPRNSPNSSFNEDLPSPNH and DSST…TQIS. Positions 688-702 are enriched in low complexity; the sequence is SAPEPSTASSSESTS. Residues 718–721 carry the PDZ-binding motif; the sequence is EILI.

It belongs to the angiomotin family. In terms of assembly, interacts with SRC. Phosphorylation at Tyr-103 is necessary for efficient binding to SRC and synergistically functioning with SRC to activate the downstream MAPK pathway. Expressed in endothelial cells.

Its subcellular location is the recycling endosome. The protein localises to the cytoplasm. It localises to the cell projection. It is found in the podosome. The protein resides in the cell junction. Its function is as follows. Required for proper architecture of actin filaments and for cell movements during embryogenesis. Plays a role in the radial actin fiber architecture in skin epithelial cells, thereby maintains cell geometry, size and cell interconnectivity within the skin. Plays an important role in coupling actin fibers to cell junctions in endothelial cells and is therefore required for correct endothelial cell morphology and maintenance of dorsal aorta lumen expansion during embryogenesis. May further play a role in the polarity, proliferation and migration of endothelial cells, and therefore participates in angiogenesis. Inhibits the Wnt/beta-catenin signaling pathway, probably by recruiting CTNNB1 to recycling endosomes and hence preventing its translocation to the nucleus. Regulates the translocation of phosphorylated SRC to peripheral cell-matrix adhesion sites. Selectively promotes FGF-induced MAPK activation through SRC. This Danio rerio (Zebrafish) protein is Angiomotin-like 2a (amotl2a).